The sequence spans 110 residues: UPF0213 protein DP2720 (110 aa).

A GIY-YIG domain is found at 12-88; sequence PAWFVYIVQC…KQLSPTRKRT (77 aa).

Belongs to the UPF0213 family.

This is UPF0213 protein DP2720 from Desulfotalea psychrophila (strain LSv54 / DSM 12343).